The following is a 207-amino-acid chain: Succinyl-CoA:3-ketoacid coenzyme A transferase subunit B (207 aa).

Glutamate 43 is an active-site residue.

This sequence belongs to the 3-oxoacid CoA-transferase subunit B family. As to quaternary structure, heterodimer of a subunit A and a subunit B.

The enzyme catalyses a 3-oxo acid + succinyl-CoA = a 3-oxoacyl-CoA + succinate. The protein is Succinyl-CoA:3-ketoacid coenzyme A transferase subunit B (scoB) of Helicobacter pylori (strain ATCC 700392 / 26695) (Campylobacter pylori).